The sequence spans 334 residues: Transcription initiation factor IIB (334 aa).

The segment at 34–65 (TETVCPECGGRQLVHDYERAELVCQSCGLVID) adopts a TFIIB-type zinc-finger fold. Zn(2+)-binding residues include Cys38, Cys41, Cys57, and Cys60. A run of 2 repeats spans residues 151-234 (SELD…SREL) and 245-326 (DYVP…ELAE).

It belongs to the TFIIB family.

Stabilizes TBP binding to an archaeal box-A promoter. Also responsible for recruiting RNA polymerase II to the pre-initiation complex (DNA-TBP-TFIIB). In Methanoregula boonei (strain DSM 21154 / JCM 14090 / 6A8), this protein is Transcription initiation factor IIB.